We begin with the raw amino-acid sequence, 291 residues long: MELLCCEGDTVRRAQPDPALLLDDRVLHNLLTVEERYLPQCSYFKCVQKDIQPFMRRMVATWMLEVCEEQRCEEEVFPMAMNYLDRFLAVIPTRKCHLQLLGAVCMFLASKLKETIPLTAEKLCIYTDNSIKPQELLEWELVVLGKLKWNLAAVTPHDFIEHILRKLPLPKDKLLLIRKHAQTFIALCATDFNFAMYPPSMIATGSVGAAICGLQLDVGETSLSGDSLTEHLAKITSTDVDCLKACQEQIESVLVSSLRQTRQQTQQRNSSKSVDELDQASTPTDVQDINL.

A disordered region spans residues 261 to 291 (TRQQTQQRNSSKSVDELDQASTPTDVQDINL). The span at 279–291 (QASTPTDVQDINL) shows a compositional bias: polar residues. Thr-282 carries the phosphothreonine modification.

It belongs to the cyclin family. Cyclin D subfamily. In terms of assembly, interacts with the cdk4 and cdk6 protein kinases to form a serine/threonine kinase holoenzyme complex. The cyclin subunit imparts substrate specificity to the complex. Phosphorylation at Thr-282 by MAP kinases is required for ubiquitination and degradation by the DCX(AMBRA1) complex. In terms of processing, ubiquitinated by the DCX(AMBRA1) complex during the transition from G1 to S cell phase, leading to its degradation: ubiquitination is dependent on Thr-282 phosphorylation. The DCX(AMBRA1) complex represents the major regulator of CCND2 stability during the G1/S transition.

It localises to the nucleus. Its subcellular location is the cytoplasm. It is found in the nucleus membrane. Its function is as follows. Regulatory component of the cyclin D2-CDK4 (DC) complex that phosphorylates and inhibits members of the retinoblastoma (RB) protein family including RB1 and regulates the cell-cycle during G(1)/S transition. Phosphorylation of RB1 allows dissociation of the transcription factor E2F from the RB/E2F complex and the subsequent transcription of E2F target genes which are responsible for the progression through the G(1) phase. Hypophosphorylates RB1 in early G(1) phase. Cyclin D-CDK4 complexes are major integrators of various mitogenenic and antimitogenic signals. This Xenopus laevis (African clawed frog) protein is G1/S-specific cyclin-D2 (ccnd2).